A 206-amino-acid polypeptide reads, in one-letter code: Ras-related protein RABG3d (206 aa).

15 to 22 (GDSGVGKT) is a binding site for GTP. Residues 37–45 (YKATIGADF) carry the Effector region motif. Residues 63–67 (DTAGQ), 125–128 (NKTD), and 158–159 (SA) each bind GTP. Residues C204 and C206 are each lipidated (S-geranylgeranyl cysteine). C206 is modified (cysteine methyl ester).

It belongs to the small GTPase superfamily. Rab family.

It localises to the cell membrane. Intracellular vesicle trafficking and protein transport. The chain is Ras-related protein RABG3d (RABG3D) from Arabidopsis thaliana (Mouse-ear cress).